A 109-amino-acid chain; its full sequence is Cell division protein ZapA (109 aa).

The stretch at 22 to 99 (EQQDALNMAA…IEQALLEQGR (78 aa)) forms a coiled coil.

The protein belongs to the ZapA family. Type 1 subfamily. In terms of assembly, homodimer. Interacts with FtsZ.

It localises to the cytoplasm. Functionally, activator of cell division through the inhibition of FtsZ GTPase activity, therefore promoting FtsZ assembly into bundles of protofilaments necessary for the formation of the division Z ring. It is recruited early at mid-cell but it is not essential for cell division. This Yersinia enterocolitica serotype O:8 / biotype 1B (strain NCTC 13174 / 8081) protein is Cell division protein ZapA.